A 201-amino-acid chain; its full sequence is Large ribosomal subunit protein bL9 (201 aa).

The segment covering 150–165 (EAERQAAGEDLTQRRD) has biased composition (basic and acidic residues). The disordered stretch occupies residues 150 to 201 (EAERQAAGEDLTQRRDDEEEEAVEAAEFFESEELAPGDEEEEAAGEEEDAKE). Acidic residues predominate over residues 166-201 (DEEEEAVEAAEFFESEELAPGDEEEEAAGEEEDAKE).

The protein belongs to the bacterial ribosomal protein bL9 family.

Its function is as follows. Binds to the 23S rRNA. The polypeptide is Large ribosomal subunit protein bL9 (Parvibaculum lavamentivorans (strain DS-1 / DSM 13023 / NCIMB 13966)).